The sequence spans 227 residues: ATP synthase F(0) complex subunit a (227 aa).

6 helical membrane passes run 14-34 (FLGI…FPTP), 69-89 (WAIL…LGLL), 99-119 (LSLN…IGMF), 139-159 (VPVL…ALGV), 165-185 (LTAG…LLTM), and 190-210 (ALLT…VAMI).

This sequence belongs to the ATPase A chain family. As to quaternary structure, component of the ATP synthase complex composed at least of ATP5F1A/subunit alpha, ATP5F1B/subunit beta, ATP5MC1/subunit c (homooctomer), MT-ATP6/subunit a, MT-ATP8/subunit 8, ATP5ME/subunit e, ATP5MF/subunit f, ATP5MG/subunit g, ATP5MK/subunit k, ATP5MJ/subunit j, ATP5F1C/subunit gamma, ATP5F1D/subunit delta, ATP5F1E/subunit epsilon, ATP5PF/subunit F6, ATP5PB/subunit b, ATP5PD/subunit d, ATP5PO/subunit OSCP. ATP synthase complex consists of a soluble F(1) head domain (subunits alpha(3) and beta(3)) - the catalytic core - and a membrane F(0) domain - the membrane proton channel (subunits c, a, 8, e, f, g, k and j). These two domains are linked by a central stalk (subunits gamma, delta, and epsilon) rotating inside the F1 region and a stationary peripheral stalk (subunits F6, b, d, and OSCP). Interacts with DNAJC30; interaction is direct.

The protein localises to the mitochondrion inner membrane. It catalyses the reaction H(+)(in) = H(+)(out). Functionally, subunit a, of the mitochondrial membrane ATP synthase complex (F(1)F(0) ATP synthase or Complex V) that produces ATP from ADP in the presence of a proton gradient across the membrane which is generated by electron transport complexes of the respiratory chain. ATP synthase complex consist of a soluble F(1) head domain - the catalytic core - and a membrane F(1) domain - the membrane proton channel. These two domains are linked by a central stalk rotating inside the F(1) region and a stationary peripheral stalk. During catalysis, ATP synthesis in the catalytic domain of F(1) is coupled via a rotary mechanism of the central stalk subunits to proton translocation. With the subunit c (ATP5MC1), forms the proton-conducting channel in the F(0) domain, that contains two crucial half-channels (inlet and outlet) that facilitate proton movement from the mitochondrial intermembrane space (IMS) into the matrix. Protons are taken up via the inlet half-channel and released through the outlet half-channel, following a Grotthuss mechanism. The sequence is that of ATP synthase F(0) complex subunit a from Scyliorhinus canicula (Small-spotted catshark).